We begin with the raw amino-acid sequence, 545 residues long: CTP synthase (545 aa).

The amidoligase domain stretch occupies residues Met-1–Ile-266. Ser-14 is a CTP binding site. UTP is bound at residue Ser-14. ATP is bound by residues Ser-15 to Ile-20 and Asp-72. Residues Asp-72 and Glu-140 each contribute to the Mg(2+) site. Residues Asp-147 to Glu-149, Lys-187 to Gln-192, and Lys-223 each bind CTP. Residues Lys-187–Gln-192 and Lys-223 contribute to the UTP site. Lys-239–Val-241 serves as a coordination point for ATP. The Glutamine amidotransferase type-1 domain maps to Thr-291–Arg-542. Residue Gly-352 coordinates L-glutamine. Residue Cys-379 is the Nucleophile; for glutamine hydrolysis of the active site. L-glutamine is bound by residues Leu-380–Gln-383, Glu-403, and Arg-470. Catalysis depends on residues His-515 and Glu-517.

Belongs to the CTP synthase family. As to quaternary structure, homotetramer.

The catalysed reaction is UTP + L-glutamine + ATP + H2O = CTP + L-glutamate + ADP + phosphate + 2 H(+). It carries out the reaction L-glutamine + H2O = L-glutamate + NH4(+). The enzyme catalyses UTP + NH4(+) + ATP = CTP + ADP + phosphate + 2 H(+). The protein operates within pyrimidine metabolism; CTP biosynthesis via de novo pathway; CTP from UDP: step 2/2. Its activity is regulated as follows. Allosterically activated by GTP, when glutamine is the substrate; GTP has no effect on the reaction when ammonia is the substrate. The allosteric effector GTP functions by stabilizing the protein conformation that binds the tetrahedral intermediate(s) formed during glutamine hydrolysis. Inhibited by the product CTP, via allosteric rather than competitive inhibition. Its function is as follows. Catalyzes the ATP-dependent amination of UTP to CTP with either L-glutamine or ammonia as the source of nitrogen. Regulates intracellular CTP levels through interactions with the four ribonucleotide triphosphates. The sequence is that of CTP synthase from Shewanella sediminis (strain HAW-EB3).